A 341-amino-acid polypeptide reads, in one-letter code: Ribosomal RNA small subunit methyltransferase C (341 aa).

Belongs to the methyltransferase superfamily. RsmC family. In terms of assembly, monomer.

The protein localises to the cytoplasm. The enzyme catalyses guanosine(1207) in 16S rRNA + S-adenosyl-L-methionine = N(2)-methylguanosine(1207) in 16S rRNA + S-adenosyl-L-homocysteine + H(+). Functionally, specifically methylates the guanine in position 1207 of 16S rRNA in the 30S particle. This is Ribosomal RNA small subunit methyltransferase C from Shewanella pealeana (strain ATCC 700345 / ANG-SQ1).